The sequence spans 303 residues: UDP-N-acetylenolpyruvoylglucosamine reductase (303 aa).

Residues 30–195 form the FAD-binding PCMH-type domain; it reads KTGGPADLLA…LSARFEMAKG (166 aa). Arg-174 is an active-site residue. Ser-224 functions as the Proton donor in the catalytic mechanism. The active site involves Glu-294.

It belongs to the MurB family. FAD serves as cofactor.

The protein localises to the cytoplasm. It catalyses the reaction UDP-N-acetyl-alpha-D-muramate + NADP(+) = UDP-N-acetyl-3-O-(1-carboxyvinyl)-alpha-D-glucosamine + NADPH + H(+). It participates in cell wall biogenesis; peptidoglycan biosynthesis. Functionally, cell wall formation. In Latilactobacillus sakei subsp. sakei (strain 23K) (Lactobacillus sakei subsp. sakei), this protein is UDP-N-acetylenolpyruvoylglucosamine reductase.